A 192-amino-acid polypeptide reads, in one-letter code: MKVQSFGERVVLFILNAIIFGRLERNLDDDDMFFLPHSVKEQAKILWRRGAAVGFYTTKMKGRLCGDGTGACYLLPVFDTVFIRRKHWHRGLGTAMLRDFCETFPEDEALGVSCSMSPAMYQAHPGNSEDVSRHARTSQNDRPRQPAPGDGSKERMCGEELEDTKDDPECGVEEEDAGLAGQPPGKLTRSSP.

Residues 121–192 (YQAHPGNSED…PPGKLTRSSP (72 aa)) are disordered. Over residues 159 to 177 (EELEDTKDDPECGVEEEDA) the composition is skewed to acidic residues.

This sequence belongs to the FAM169 family.

The sequence is that of Protein FAM169BP from Homo sapiens (Human).